A 505-amino-acid chain; its full sequence is Deoxyguanosinetriphosphate triphosphohydrolase (505 aa).

Residues 66 to 273 form the HD domain; that stretch reads RLTHSMEVQQ…MEAADDISYC (208 aa).

Belongs to the dGTPase family. Type 1 subfamily. Homotetramer. It depends on Mg(2+) as a cofactor.

It carries out the reaction dGTP + H2O = 2'-deoxyguanosine + triphosphate + H(+). Functionally, dGTPase preferentially hydrolyzes dGTP over the other canonical NTPs. The sequence is that of Deoxyguanosinetriphosphate triphosphohydrolase from Escherichia coli O7:K1 (strain IAI39 / ExPEC).